The chain runs to 644 residues: MATTAAAAAAALSAAATAKTGRKNHQRHHVLPARGRVGAAAVRCSAVSPVTPPSPAPPATPLRPWGPAEPRKGADILVEALERCGVSDVFAYPGGASMEIHQALTRSPVITNHLFRHEQGEAFAASGYARASGRVGVCVATSGPGATNLVSALADALLDSVPMVAITGQVPRRMIGTDAFQETPIVEVTRSITKHNYLVLDVEDIPRVIQEAFFLASSGRPGPVLVDIPKDIQQQMAVPVWDTSMNLPGYIARLPKPPATELLEQVLRLVGESRRPILYVGGGCSASGDELRWFVELTGIPVTTTLMGLGNFPSDDPLSLRMLGMHGTVYANYAVDKADLLLAFGVRFDDRVTGKIEAFASRAKIVHIDIDPAEIGKNKQPHVSICADVKLALQGLNALLQQSTTKTSSDFSAWHNELDQQKREFPLGYKTFGEEIPPQYAIQVLDELTKGEAIIATGVGQHQMWAAQYYTYKRPRQWLSSAGLGAMGFGLPAAAGASVANPGVTVVDIDGDGSFLMNIQELALIRIENLPVKVMVLNNQHLGMVVQWEDRFYKANRAHTYLGNPECESEIYPDFVTIAKGFNIPAVRVTKKSEVRAAIKKMLETPGPYLLDIIVPHQEHVLPMIPSGGAFKDMILDGDGRTVY.

The N-terminal 43 residues, 1–43 (MATTAAAAAAALSAAATAKTGRKNHQRHHVLPARGRVGAAAVR), are a transit peptide targeting the chloroplast. The tract at residues 47–67 (VSPVTPPSPAPPATPLRPWGP) is disordered. Positions 50–61 (VTPPSPAPPATP) are enriched in pro residues. A thiamine diphosphate-binding site is contributed by glutamate 118. The cysteines at positions 138 and 284 are disulfide-linked. FAD is bound by residues arginine 220, 326-347 (HGTV…FGVR), and 369-388 (DIDP…ICAD). The interval 461 to 541 (QHQMWAAQYY…VKVMVLNNQH (81 aa)) is thiamine pyrophosphate binding. Positions 512 and 539 each coordinate Mg(2+).

It belongs to the TPP enzyme family. Mg(2+) is required as a cofactor. Thiamine diphosphate serves as cofactor.

It localises to the plastid. Its subcellular location is the chloroplast. It carries out the reaction 2 pyruvate + H(+) = (2S)-2-acetolactate + CO2. It participates in amino-acid biosynthesis; L-isoleucine biosynthesis; L-isoleucine from 2-oxobutanoate: step 1/4. Its pathway is amino-acid biosynthesis; L-valine biosynthesis; L-valine from pyruvate: step 1/4. The protein is Acetolactate synthase 1, chloroplastic (ALS1) of Oryza sativa subsp. japonica (Rice).